Consider the following 278-residue polypeptide: Nucleotide-binding protein Tmel_1373 (278 aa).

ATP is bound at residue 10-17; that stretch reads GLSGAGKS. 58-61 serves as a coordination point for GTP; the sequence is DSRS.

This sequence belongs to the RapZ-like family.

Functionally, displays ATPase and GTPase activities. The protein is Nucleotide-binding protein Tmel_1373 of Thermosipho melanesiensis (strain DSM 12029 / CIP 104789 / BI429).